Here is a 388-residue protein sequence, read N- to C-terminus: Succinate--CoA ligase [ADP-forming] subunit beta (388 aa).

The ATP-grasp domain maps to 9-244 (KQLFAEYGLP…PSQDDPREAH (236 aa)). ATP is bound by residues K46, 53–55 (GRG), E99, T102, and E107. Mg(2+) contacts are provided by N199 and D213. Residues N264 and 321 to 323 (GIV) contribute to the substrate site.

It belongs to the succinate/malate CoA ligase beta subunit family. In terms of assembly, heterotetramer of two alpha and two beta subunits. The cofactor is Mg(2+).

It carries out the reaction succinate + ATP + CoA = succinyl-CoA + ADP + phosphate. The catalysed reaction is GTP + succinate + CoA = succinyl-CoA + GDP + phosphate. It functions in the pathway carbohydrate metabolism; tricarboxylic acid cycle; succinate from succinyl-CoA (ligase route): step 1/1. In terms of biological role, succinyl-CoA synthetase functions in the citric acid cycle (TCA), coupling the hydrolysis of succinyl-CoA to the synthesis of either ATP or GTP and thus represents the only step of substrate-level phosphorylation in the TCA. The beta subunit provides nucleotide specificity of the enzyme and binds the substrate succinate, while the binding sites for coenzyme A and phosphate are found in the alpha subunit. In Aeromonas hydrophila subsp. hydrophila (strain ATCC 7966 / DSM 30187 / BCRC 13018 / CCUG 14551 / JCM 1027 / KCTC 2358 / NCIMB 9240 / NCTC 8049), this protein is Succinate--CoA ligase [ADP-forming] subunit beta.